A 78-amino-acid chain; its full sequence is Conotoxin 6 (78 aa).

Positions 1–22 are cleaved as a signal peptide; it reads MKLTCMMIVAVLFLTAWIFITA. Residues 23 to 51 constitute a propeptide that is removed on maturation; the sequence is DNSRNGIENLPRMRRHEMKNPKASKLNKR. Cystine bridges form between cysteine 53–cysteine 69, cysteine 60–cysteine 73, and cysteine 68–cysteine 77.

This sequence belongs to the conotoxin O1 superfamily. In terms of tissue distribution, expressed by the venom duct.

It is found in the secreted. In Conus imperialis (Imperial cone), this protein is Conotoxin 6.